Here is a 446-residue protein sequence, read N- to C-terminus: N-succinylarginine dihydrolase (446 aa).

Substrate is bound by residues 19–28, Asn110, and 137–138; these read AGLSFGNVAS and HR. Glu174 is a catalytic residue. Arg213 is a substrate binding site. His249 is an active-site residue. Substrate is bound by residues Asp251 and Asn364. Cys370 functions as the Nucleophile in the catalytic mechanism.

It belongs to the succinylarginine dihydrolase family. In terms of assembly, homodimer.

It carries out the reaction N(2)-succinyl-L-arginine + 2 H2O + 2 H(+) = N(2)-succinyl-L-ornithine + 2 NH4(+) + CO2. It participates in amino-acid degradation; L-arginine degradation via AST pathway; L-glutamate and succinate from L-arginine: step 2/5. Functionally, catalyzes the hydrolysis of N(2)-succinylarginine into N(2)-succinylornithine, ammonia and CO(2). The protein is N-succinylarginine dihydrolase of Burkholderia thailandensis (strain ATCC 700388 / DSM 13276 / CCUG 48851 / CIP 106301 / E264).